We begin with the raw amino-acid sequence, 278 residues long: 3-methyl-2-oxobutanoate hydroxymethyltransferase (278 aa).

Positions 44 and 83 each coordinate Mg(2+). 3-methyl-2-oxobutanoate contacts are provided by residues aspartate 44 to serine 45, aspartate 83, and lysine 112. Position 114 (glutamate 114) interacts with Mg(2+). The active-site Proton acceptor is glutamate 181.

The protein belongs to the PanB family. Homodecamer; pentamer of dimers. Mg(2+) is required as a cofactor.

It is found in the cytoplasm. It carries out the reaction 3-methyl-2-oxobutanoate + (6R)-5,10-methylene-5,6,7,8-tetrahydrofolate + H2O = 2-dehydropantoate + (6S)-5,6,7,8-tetrahydrofolate. It participates in cofactor biosynthesis; (R)-pantothenate biosynthesis; (R)-pantoate from 3-methyl-2-oxobutanoate: step 1/2. Its function is as follows. Catalyzes the reversible reaction in which hydroxymethyl group from 5,10-methylenetetrahydrofolate is transferred onto alpha-ketoisovalerate to form ketopantoate. In Roseiflexus sp. (strain RS-1), this protein is 3-methyl-2-oxobutanoate hydroxymethyltransferase.